A 156-amino-acid chain; its full sequence is Arginine repressor (156 aa).

It belongs to the ArgR family.

Its subcellular location is the cytoplasm. It functions in the pathway amino-acid biosynthesis; L-arginine biosynthesis [regulation]. In terms of biological role, regulates arginine biosynthesis genes. The protein is Arginine repressor of Salmonella paratyphi C (strain RKS4594).